A 388-amino-acid chain; its full sequence is Chorismate synthase (388 aa).

Residues Arg39 and Arg45 each contribute to the NADP(+) site. FMN-binding positions include 130 to 132, 251 to 252, Gly296, 311 to 315, and Arg337; these read RSS, NA, and KPIPT.

This sequence belongs to the chorismate synthase family. As to quaternary structure, homotetramer. The cofactor is FMNH2.

The catalysed reaction is 5-O-(1-carboxyvinyl)-3-phosphoshikimate = chorismate + phosphate. Its pathway is metabolic intermediate biosynthesis; chorismate biosynthesis; chorismate from D-erythrose 4-phosphate and phosphoenolpyruvate: step 7/7. Catalyzes the anti-1,4-elimination of the C-3 phosphate and the C-6 proR hydrogen from 5-enolpyruvylshikimate-3-phosphate (EPSP) to yield chorismate, which is the branch point compound that serves as the starting substrate for the three terminal pathways of aromatic amino acid biosynthesis. This reaction introduces a second double bond into the aromatic ring system. This is Chorismate synthase from Streptococcus pyogenes serotype M5 (strain Manfredo).